Here is a 314-residue protein sequence, read N- to C-terminus: Probable cell division protein WhiA (314 aa).

The H-T-H motif DNA-binding region spans Ser274 to Asn308.

It belongs to the WhiA family.

Functionally, involved in cell division and chromosome segregation. This chain is Probable cell division protein WhiA, found in Staphylococcus aureus (strain Mu3 / ATCC 700698).